Here is a 517-residue protein sequence, read N- to C-terminus: Apolipoprotein N-acyltransferase (517 aa).

The next 7 membrane-spanning stretches (helical) occupy residues 5–25, 26–46, 55–75, 90–110, 128–148, 162–182, and 193–213; these read SFFSLGRLLLAVPAGAIATLT, FAPYNYWLLAPVSIALLLWLL, GLIGFLWGLGLFGTGISWVHV, FLMSSLISYLALYPAAFGALF, VIWLLLDWVRGWALTGFPWLW, APILGVEGITLALVLISGALV, and LMVPVLIMALTWAANTVSWVV. The CN hydrolase domain occupies 225–471; that stretch reads IQGNVPQELK…TAVLRATITP (247 aa). Catalysis depends on Glu264, which acts as the Proton acceptor. Lys330 is a catalytic residue. The active-site Nucleophile is Cys382.

Belongs to the CN hydrolase family. Apolipoprotein N-acyltransferase subfamily.

The protein localises to the cell inner membrane. The catalysed reaction is N-terminal S-1,2-diacyl-sn-glyceryl-L-cysteinyl-[lipoprotein] + a glycerophospholipid = N-acyl-S-1,2-diacyl-sn-glyceryl-L-cysteinyl-[lipoprotein] + a 2-acyl-sn-glycero-3-phospholipid + H(+). It participates in protein modification; lipoprotein biosynthesis (N-acyl transfer). Its function is as follows. Catalyzes the phospholipid dependent N-acylation of the N-terminal cysteine of apolipoprotein, the last step in lipoprotein maturation. The polypeptide is Apolipoprotein N-acyltransferase (Photobacterium profundum (strain SS9)).